The following is a 176-amino-acid chain: MTTIVSVRRHGKVVMGGDGQVSLGNTVMKGNAKKVRRLYHGQVLAGFAGATADAFTLFERFEGQLEKHQGHLVRAAVELAKEWRTDRSLSRLEAMLAVANKDASLIITGNGDVVEPEHGLIAMGSGGGYAQAAASALLKKTDLSAREIVETALGIAGDICVFTNHNQTIEEQDLAE.

Residue Thr-2 is part of the active site. Positions 157, 160, and 163 each coordinate Na(+).

It belongs to the peptidase T1B family. HslV subfamily. A double ring-shaped homohexamer of HslV is capped on each side by a ring-shaped HslU homohexamer. The assembly of the HslU/HslV complex is dependent on binding of ATP.

The protein resides in the cytoplasm. The catalysed reaction is ATP-dependent cleavage of peptide bonds with broad specificity.. Allosterically activated by HslU binding. Functionally, protease subunit of a proteasome-like degradation complex believed to be a general protein degrading machinery. The protein is ATP-dependent protease subunit HslV of Pseudomonas fluorescens (strain SBW25).